The sequence spans 116 residues: Aspartate 1-decarboxylase (116 aa).

Ser-25 functions as the Schiff-base intermediate with substrate; via pyruvic acid in the catalytic mechanism. The residue at position 25 (Ser-25) is a Pyruvic acid (Ser). Thr-57 lines the substrate pocket. The active-site Proton donor is Tyr-58. 73 to 75 (GAA) provides a ligand contact to substrate.

Belongs to the PanD family. As to quaternary structure, heterooctamer of four alpha and four beta subunits. Pyruvate serves as cofactor. In terms of processing, is synthesized initially as an inactive proenzyme, which is activated by self-cleavage at a specific serine bond to produce a beta-subunit with a hydroxyl group at its C-terminus and an alpha-subunit with a pyruvoyl group at its N-terminus.

It localises to the cytoplasm. The enzyme catalyses L-aspartate + H(+) = beta-alanine + CO2. The protein operates within cofactor biosynthesis; (R)-pantothenate biosynthesis; beta-alanine from L-aspartate: step 1/1. Its function is as follows. Catalyzes the pyruvoyl-dependent decarboxylation of aspartate to produce beta-alanine. The sequence is that of Aspartate 1-decarboxylase from Leptospira interrogans serogroup Icterohaemorrhagiae serovar copenhageni (strain Fiocruz L1-130).